We begin with the raw amino-acid sequence, 529 residues long: Retinoic acid-induced protein 2 (529 aa).

Disordered regions lie at residues 1-21 (MDDL…PTLA) and 400-419 (SHSS…HPGS). The segment covering 407–416 (GTEMVSQPSH) has biased composition (polar residues).

The sequence is that of Retinoic acid-induced protein 2 (Rai2) from Mus musculus (Mouse).